A 702-amino-acid polypeptide reads, in one-letter code: DNA ligase (702 aa).

Residues 32–36 (DAEYD) and 81–82 (SL) contribute to the NAD(+) site. Residues 104 to 125 (AESSAQKASLNPLVRDSDQKNR) are disordered. Glu-139 is an NAD(+) binding site. Residue Lys-141 is the N6-AMP-lysine intermediate of the active site. The NAD(+) site is built by Arg-162, Glu-199, Lys-316, and Lys-340. 4 residues coordinate Zn(2+): Cys-434, Cys-437, Cys-452, and Cys-458. The BRCT domain occupies 616 to 702 (KPNHPFRDKT…KALKPEGTKV (87 aa)).

It belongs to the NAD-dependent DNA ligase family. LigA subfamily. The cofactor is Mg(2+). Mn(2+) serves as cofactor.

It carries out the reaction NAD(+) + (deoxyribonucleotide)n-3'-hydroxyl + 5'-phospho-(deoxyribonucleotide)m = (deoxyribonucleotide)n+m + AMP + beta-nicotinamide D-nucleotide.. Functionally, DNA ligase that catalyzes the formation of phosphodiester linkages between 5'-phosphoryl and 3'-hydroxyl groups in double-stranded DNA using NAD as a coenzyme and as the energy source for the reaction. It is essential for DNA replication and repair of damaged DNA. The chain is DNA ligase from Hamiltonella defensa subsp. Acyrthosiphon pisum (strain 5AT).